Here is a 291-residue protein sequence, read N- to C-terminus: MRRNLTPFFFLLPALTLMVPFVIYPVFKTIYLSFFLGDKFVGLENYKNVLLSPDIVNLERFPTKSPPWGALIHNIVWIAIHLPTTIFLGLGFALLLRKKEVKGSSIIKSIIFLGMVIPMVVGGLIIRFLFEEGAGVIPAFFKLIGIEKLAITWTAYPQTALFSVILGSIWIWTGFSMLMYSAGLASIPKDYYEAALIDGANKFQIFRFVIWPLLRPITVVIVAMTLLWDLKIFDIVYVATGGGPGGASMVLALQMWDYFARSLNYNYAAVVAVLLTALTFIPALWLIKRRG.

8 helical membrane passes run 7–27, 75–95, 106–126, 133–153, 160–180, 208–228, 232–252, and 267–287; these read PFFF…YPVF, IVWI…FALL, IIKS…GLII, GAGV…AITW, ALFS…MLMY, FVIW…TLLW, IFDI…MVLA, and YAAV…LWLI. An ABC transmembrane type-1 domain is found at 71–286; the sequence is LIHNIVWIAI…ALTFIPALWL (216 aa).

This sequence belongs to the binding-protein-dependent transport system permease family. MalFG subfamily.

It localises to the cell membrane. Its function is as follows. Probably part of a binding-protein-dependent transport system PH1036/38/39. Probably responsible for the translocation of the substrate across the membrane. In Pyrococcus horikoshii (strain ATCC 700860 / DSM 12428 / JCM 9974 / NBRC 100139 / OT-3), this protein is Probable ABC transporter permease protein PH1038.